The primary structure comprises 81 residues: Protein Vpu (81 aa).

The Extracellular segment spans residues 1–6 (MQPIQI). A helical membrane pass occupies residues 7-27 (AIVALVVAIIIAIVVWSIVII). Over 28–81 (EYRKILRQRKIDRLIDRLIERAEDSGNESEGEISALVEMGVEMGHHAPWDVDDL) the chain is Cytoplasmic. A phosphoserine; by host CK2 mark is found at S52 and S56.

It belongs to the HIV-1 VPU protein family. Homopentamer. Interacts with host CD4 and BRTC; these interactions induce proteasomal degradation of CD4. Interacts with host BST2; this interaction leads to the degradation of host BST2. Interacts with host FBXW11. Interacts with host AP1M1; this interaction plays a role in the mistrafficking and subsequent degradation of host BST2. Interacts with host RANBP2; this interaction allows Vpu to down-regulate host BLM sumoylation. In terms of processing, phosphorylated by host CK2. This phosphorylation is necessary for interaction with human BTRC and degradation of CD4.

It localises to the host membrane. Its activity is regulated as follows. Ion channel activity is inhibited by hexamethylene amiloride in vitro. Its function is as follows. Enhances virion budding by targeting host CD4 and Tetherin/BST2 to proteasome degradation. Degradation of CD4 prevents any unwanted premature interactions between viral Env and its host receptor CD4 in the endoplasmic reticulum. Degradation of antiretroviral protein Tetherin/BST2 is important for virion budding, as BST2 tethers new viral particles to the host cell membrane. Mechanistically, Vpu bridges either CD4 or BST2 to BTRC, a substrate recognition subunit of the Skp1/Cullin/F-box protein E3 ubiquitin ligase, induces their ubiquitination and subsequent proteasomal degradation. The alteration of the E3 ligase specificity by Vpu seems to promote the degradation of host IKBKB, leading to NF-kappa-B down-regulation and subsequent apoptosis. Acts as a viroporin that forms an oligomeric ion channel in membranes. Modulates the host DNA repair mechanisms to promote degradation of nuclear viral cDNA in cells that are already productively infected in order to suppress immune sensing and proviral hyper-integration (superinfection). Manipulates PML-NBs and modulates SUMOylation of host BLM protein thereby enhancing its DNA-end processing activity toward viral unintegrated linear DNA. Also inhibits RAD52-mediated homologous repair of viral cDNA, preventing the generation of dead-end circular forms of single copies of the long terminal repeat and permitting sustained nucleolytic attack. The sequence is that of Protein Vpu from Human immunodeficiency virus type 1 group M subtype B (isolate BH10) (HIV-1).